A 301-amino-acid chain; its full sequence is Thioredoxin-related transmembrane protein 2-A (301 aa).

The first 19 residues, 1 to 19 (MSLIRGLISTIYYLPKIYK), serve as a signal peptide directing secretion. Residues 20–111 (WFYRPYYFLS…VVLFFRVDLR (92 aa)) lie on the Extracellular side of the membrane. A helical transmembrane segment spans residues 112–132 (FGLLYLTLCVVFLITCKPPAY). Positions 122 to 269 (VFLITCKPPA…IFQKYKKFSK (148 aa)) constitute a Thioredoxin domain. Over 133-301 (MGPENIKYFR…EEDSESKKDK (169 aa)) the chain is Cytoplasmic. The interval 268–301 (SKGEKPEEPQPVLEEESESPLEEEEEDSESKKDK) is disordered. Positions 280 to 295 (LEEESESPLEEEEEDS) are enriched in acidic residues. The short motif at 298–301 (KKDK) is the Di-lysine motif element.

Monomer. Homodimer; disulfide-linked. Occurs in both reduced and oxidized monomeric form. Oxidative conditions increase homodimerization.

The protein localises to the endoplasmic reticulum membrane. The protein resides in the mitochondrion membrane. In terms of biological role, endoplasmic reticulum and mitochondria-associated protein that probably functions as a regulator of cellular redox state and thereby regulates protein post-translational modification, protein folding and mitochondrial activity. This is Thioredoxin-related transmembrane protein 2-A from Danio rerio (Zebrafish).